Reading from the N-terminus, the 305-residue chain is tRNA dimethylallyltransferase (305 aa).

11-18 contributes to the ATP binding site; that stretch reads GPTAVGKT. A substrate-binding site is contributed by 13-18; the sequence is TAVGKT. Residues 36–39 are interaction with substrate tRNA; the sequence is DSMQ.

The protein belongs to the IPP transferase family. As to quaternary structure, monomer. It depends on Mg(2+) as a cofactor.

The catalysed reaction is adenosine(37) in tRNA + dimethylallyl diphosphate = N(6)-dimethylallyladenosine(37) in tRNA + diphosphate. Functionally, catalyzes the transfer of a dimethylallyl group onto the adenine at position 37 in tRNAs that read codons beginning with uridine, leading to the formation of N6-(dimethylallyl)adenosine (i(6)A). The chain is tRNA dimethylallyltransferase from Listeria innocua serovar 6a (strain ATCC BAA-680 / CLIP 11262).